We begin with the raw amino-acid sequence, 344 residues long: MTDSLTIARPDDWHLHFRDGDLLAETVPATANVFGRAIVMPNLTPPVNTVAEAAEYRERILAQVPAGVNFEPLMVLYLTDSTPVQEVERAANSDFVHALKLYPAGATTNSDSGVTDPGKITHLYEAMEKHDVPLLVHGEVTDAEVDIFDRERVFIDRYLADIRDQFPALRIVFEHVTTAEGVNFVREANALTAATVTPQHLLMNRNDLLVGGVRPHNYCLPILKRRQHQEAIQKAVIEGNSRFFLGTDSAPHARTKKEAACGCAGCYSARAALPLYATFLEQHNALDKLEGFASHFGADFYRLPRHTDTVTLVRKPWAVPTVIDAAGEPVVPFFAGEQLPWSLG.

Residues His14 and His16 each coordinate Zn(2+). Substrate contacts are provided by residues 16–18 (HFR) and Asn42. Zn(2+) contacts are provided by Lys100, His137, and His175. Lys100 carries the N6-carboxylysine modification. Residue His137 participates in substrate binding. Leu220 is a binding site for substrate. Position 248 (Asp248) interacts with Zn(2+). Asp248 is an active-site residue. Residues His252 and Ala264 each contribute to the substrate site.

This sequence belongs to the metallo-dependent hydrolases superfamily. DHOase family. Class II DHOase subfamily. As to quaternary structure, homodimer. It depends on Zn(2+) as a cofactor.

The enzyme catalyses (S)-dihydroorotate + H2O = N-carbamoyl-L-aspartate + H(+). Its pathway is pyrimidine metabolism; UMP biosynthesis via de novo pathway; (S)-dihydroorotate from bicarbonate: step 3/3. Its function is as follows. Catalyzes the reversible cyclization of carbamoyl aspartate to dihydroorotate. In Alcanivorax borkumensis (strain ATCC 700651 / DSM 11573 / NCIMB 13689 / SK2), this protein is Dihydroorotase.